The sequence spans 235 residues: Glial cell line-derived neurotrophic factor (235 aa).

A signal peptide spans 1 to 19; it reads MKLWDILATCLLLLSSVST. The propeptide occupies 20-87; sequence RPLFHKLQPS…DFIEATLGRL (68 aa). 2 disordered regions span residues 34–60 and 91–137; these read VRSE…ASME and SDVE…RVKG. The span at 119-128 shows a compositional bias: basic residues; the sequence is GERKRSRGRA. Disulfide bonds link Cys142-Cys203, Cys169-Cys232, and Cys173-Cys234. N-linked (GlcNAc...) asparagine glycans are attached at residues Asn150 and Asn186.

This sequence belongs to the TGF-beta family. GDNF subfamily. As to quaternary structure, homodimer; disulfide-linked. Interacts with GFRA1 coreceptor and RET: forms a 2:2:2 ternary complex composed of GDNF ligand, GFRA1 and RET receptor. In terms of tissue distribution, first expressed at 14 hours post-fertilization (hpf) in the ventral half of anterior somites and in intermediate mesoderm. Ventral somitic expression persists and extends more posteriorly over the next 12 hours. Expressed throughout the ventral trunk mesoderm and endoderm at 24 hpf. By 30 hpf, somitic expression ceases and by 36 hpf, expression becomes restricted to the endodermal cells forming the gut, with expression along the whole length of the developing gut tube at 72 hpf.

It is found in the secreted. In terms of biological role, neurotrophic factor that enhances survival and morphological differentiation of dopaminergic neurons and increases their high-affinity dopamine uptake. Acts by binding to its coreceptor, GFRA1, leading to autophosphorylation and activation of the RET receptor. This is Glial cell line-derived neurotrophic factor from Danio rerio (Zebrafish).